The sequence spans 2253 residues: Polycystin family receptor for egg jelly (2253 aa).

Positions 1-19 (MRPGPALLLLGVGLSLSVG) are cleaved as a signal peptide. Over 20 to 1184 (RLPLPPVPRG…NIIKSLHQNP (1165 aa)) the chain is Extracellular. Residues 154-169 (RPASPAARVSPRSAAP) are compositionally biased toward low complexity. The segment at 154–177 (RPASPAARVSPRSAAPGPRPQQGF) is disordered. 14 N-linked (GlcNAc...) asparagine glycosylation sites follow: asparagine 197, asparagine 242, asparagine 295, asparagine 306, asparagine 345, asparagine 349, asparagine 481, asparagine 674, asparagine 849, asparagine 890, asparagine 923, asparagine 939, asparagine 958, and asparagine 965. The REJ domain occupies 215–913 (CVIQRVRINT…STMFCDFTND (699 aa)). Residues 1185-1205 (VTLFTVLFIILLYVGLAFWAL) form a helical membrane-spanning segment. Residues 1206–1389 (YRDEMDQHLR…VAKTFNRLQR (184 aa)) are Cytoplasmic-facing. The 118-residue stretch at 1230 to 1347 (LCYLVTIFTG…TLDRTFHVTH (118 aa)) folds into the PLAT domain. Residues 1390 to 1410 (LSCCLAMLLSSLLCNIMFFNL) form a helical membrane-spanning segment. The Extracellular segment spans residues 1411 to 1427 (NRQEQTESRERKYMRSM). Residues 1428–1448 (MIGIESVLITIPVQLLITFLF) traverse the membrane as a helical segment. The Cytoplasmic segment spans residues 1449 to 1576 (TCSQRKPQAD…KPRIVLPWWC (128 aa)). The tract at residues 1494–1562 (PREVAKPASK…EQHPSQKDLQ (69 aa)) is disordered. Basic residues predominate over residues 1517–1527 (SKPKHRHRKAQ). A compositionally biased stretch (basic and acidic residues) spans 1549–1558 (DVHSEQHPSQ). Residues 1577-1597 (VYVAWFLVFATSSISSFFIVF) traverse the membrane as a helical segment. Residues 1598 to 1607 (YGLTYGYDKS) lie on the Extracellular side of the membrane. A helical transmembrane segment spans residues 1608-1628 (IEWLFASFCSFCQSVLLVQPS). Topologically, residues 1629–1708 (KIILLSGFRT…RKKRIKRRAL (80 aa)) are cytoplasmic. A helical transmembrane segment spans residues 1709–1729 (LFLSYILTHFIFLALLLILIV). Over 1730–1966 (LLRHTDCFYY…FDRKASAEIY (237 aa)) the chain is Extracellular. 3 N-linked (GlcNAc...) asparagine glycosylation sites follow: asparagine 1836, asparagine 1893, and asparagine 1944. A helical membrane pass occupies residues 1967-1987 (LYVAILIFFLAYVVDEGCIIM). Over 1988-1996 (QERASYVRS) the chain is Cytoplasmic. The chain crosses the membrane as a helical span at residues 1997–2017 (VYNLLNFALKCIFTVLIVLFL). The Extracellular segment spans residues 2018 to 2042 (RKHFLATGIIRFYLSNPEDFIPFHA). Residues 2043-2063 (VSQVDHIMRIILGFLLFLTIL) form a helical membrane-spanning segment. The Cytoplasmic portion of the chain corresponds to 2064 to 2091 (KTLRYSRFFYDVRLAQRAIQAALPGICH). Residues 2092 to 2112 (MAFVVSVYFFVYMAFGYLVFG) form a helical membrane-spanning segment. Topologically, residues 2113 to 2145 (QHEWNYSNLIHSTQTVFSYCVSAFQNTEFSNNR) are extracellular. A helical membrane pass occupies residues 2146 to 2166 (ILGVLFLSSFMLVMICVLINL). Residues 2167 to 2253 (FQAVILSAYE…NGKKMVYLVV (87 aa)) are Cytoplasmic-facing.

The protein belongs to the polycystin family. In terms of tissue distribution, exclusively expressed in testis.

The protein resides in the cell membrane. It localises to the cytoplasmic vesicle. Its subcellular location is the secretory vesicle. It is found in the acrosome membrane. The protein localises to the nucleus. Functionally, testis-specific protein that controls sperm transport and the timing of zona pellucida-evoked exocytosis of the sperm acrosome. This Homo sapiens (Human) protein is Polycystin family receptor for egg jelly.